We begin with the raw amino-acid sequence, 240 residues long: Sugar fermentation stimulation protein homolog (240 aa).

Belongs to the SfsA family.

This is Sugar fermentation stimulation protein homolog from Saccharolobus islandicus (strain M.16.4 / Kamchatka #3) (Sulfolobus islandicus).